The sequence spans 411 residues: MATTATMATSGSARKRLLKEEDMTKVEFETSEEVDVTPTFDTMGLREDLLRGIYAYGFEKPSAIQQRAIKQIIKGRDVIAQSQSGTGKTATFSISVLQCLDIQVRETQALILAPTRELAVQIQKGLLALGDYMNVQCHACIGGTNVGEDIRKLDYGQHVVAGTPGRVFDMIRRRSLRTRAIKMLVLDEADEMLNKGFKEQIYDVYRYLPPATQVVLISATLPHEILEMTNKFMTDPIRILVKRDELTLEGIKQFFVAVEREEWKFDTLCDLYDTLTITQAVIFCNTKRKVDWLTEKMREANFTVSSMHGDMPQKERESIMKEFRSGASRVLISTDVWARGLDVPQVSLIINYDLPNNRELYIHRIGRSGRYGRKGVAINFVKNDDIRILRDIEQYYSTQIDEMPMNVADLI.

N-acetylmethionine is present on Met-1. Position 2 is an N-acetylalanine; in Eukaryotic initiation factor 4A-III, N-terminally processed (Ala-2). Ser-10 and Ser-12 each carry phosphoserine. Lys-19 is covalently cross-linked (Glycyl lysine isopeptide (Lys-Gly) (interchain with G-Cter in SUMO2)). Positions 38–66 (PTFDTMGLREDLLRGIYAYGFEKPSAIQQ) match the Q motif motif. ATP is bound by residues Lys-60, Gln-65, and 85–90 (GTGKTA). The region spanning 69–239 (IKQIIKGRDV…NKFMTDPIRI (171 aa)) is the Helicase ATP-binding domain. Lys-124 bears the N6-acetyllysine mark. Lys-152 is covalently cross-linked (Glycyl lysine isopeptide (Lys-Gly) (interchain with G-Cter in SUMO2)). The residue at position 163 (Thr-163) is a Phosphothreonine. A DEAD box motif is present at residues 187–190 (DEAD). An N6-acetyllysine mark is found at Lys-198 and Lys-296. A Helicase C-terminal domain is found at 250 to 411 (GIKQFFVAVE…EMPMNVADLI (162 aa)). A Glycyl lysine isopeptide (Lys-Gly) (interchain with G-Cter in SUMO2) cross-link involves residue Lys-314. Lys-321 carries the N6-acetyllysine modification. ATP is bound by residues Asp-342 and 367–371 (RSGRY). Residues Lys-374 and Lys-382 each participate in a glycyl lysine isopeptide (Lys-Gly) (interchain with G-Cter in SUMO2) cross-link.

This sequence belongs to the DEAD box helicase family. eIF4A subfamily. Identified in the spliceosome C complex. Core component of the mRNA splicing-dependent exon junction complex (EJC); the core complex contains CASC3, EIF4A3, MAGOH or MAGOHB, and RBM8A. Interacts with CASC3, MAGOH, NXF1, RBM8A and ALYREF/THOC4. Component of the ALYREF/THOC4-EJC-RNA complex; in the complex interacts with MAGOH, RBM8A and THOC4 (via the WXHD motif); these interactions are likely specific to RNA-bound EJC. May interact with NOM1. Interacts with POLDIP3. Interacts with CWC22 and PRPF19 in an RNA-independent manner. Direct interaction with CWC22 is mediated by the helicase C-terminal domain. Full interaction with CWC22 occurs only when EIF4A3 is not part of the EJC and prevents EIF4A3 binding to RNA. Identified in a complex composed of the EJC core, UPF3B and UPF2. The EJC core can also interact with UPF3A (in vitro). Interacts with NCBP3. Interacts with NRDE2. Interacts with DHX34; the interaction is RNA-independent. As to expression, ubiquitously expressed.

It localises to the nucleus. The protein localises to the nucleus speckle. It is found in the cytoplasm. The catalysed reaction is ATP + H2O = ADP + phosphate + H(+). Its activity is regulated as follows. The ATPase activity is increased some 4-fold in the presence of RNA. Its function is as follows. ATP-dependent RNA helicase. Involved in pre-mRNA splicing as component of the spliceosome. Core component of the splicing-dependent multiprotein exon junction complex (EJC) deposited at splice junctions on mRNAs. The EJC is a dynamic structure consisting of core proteins and several peripheral nuclear and cytoplasmic associated factors that join the complex only transiently either during EJC assembly or during subsequent mRNA metabolism. The EJC marks the position of the exon-exon junction in the mature mRNA for the gene expression machinery and the core components remain bound to spliced mRNAs throughout all stages of mRNA metabolism thereby influencing downstream processes including nuclear mRNA export, subcellular mRNA localization, translation efficiency and nonsense-mediated mRNA decay (NMD). Its RNA-dependent ATPase and RNA-helicase activities are induced by CASC3, but abolished in presence of the MAGOH-RBM8A heterodimer, thereby trapping the ATP-bound EJC core onto spliced mRNA in a stable conformation. The inhibition of ATPase activity by the MAGOH-RBM8A heterodimer increases the RNA-binding affinity of the EJC. Involved in translational enhancement of spliced mRNAs after formation of the 80S ribosome complex. Binds spliced mRNA in sequence-independent manner, 20-24 nucleotides upstream of mRNA exon-exon junctions. Shows higher affinity for single-stranded RNA in an ATP-bound core EJC complex than after the ATP is hydrolyzed. Involved in the splicing modulation of BCL2L1/Bcl-X (and probably other apoptotic genes); specifically inhibits formation of proapoptotic isoforms such as Bcl-X(S); the function is different from the established EJC assembly. Involved in craniofacial development. In Homo sapiens (Human), this protein is Eukaryotic initiation factor 4A-III (EIF4A3).